The sequence spans 590 residues: Glutamine--fructose-6-phosphate aminotransferase [isomerizing] (590 aa).

Cys-2 functions as the Nucleophile; for GATase activity in the catalytic mechanism. A Glutamine amidotransferase type-2 domain is found at 2 to 219 (CGIVACILKD…DGEMVILDGD (218 aa)). SIS domains are found at residues 277–415 (VVEE…PELM) and 438–580 (LAAT…PDKP). The active-site For Fru-6P isomerization activity is Lys-585.

As to quaternary structure, homodimer.

The protein localises to the cytoplasm. It carries out the reaction D-fructose 6-phosphate + L-glutamine = D-glucosamine 6-phosphate + L-glutamate. Catalyzes the first step in hexosamine metabolism, converting fructose-6P into glucosamine-6P using glutamine as a nitrogen source. The chain is Glutamine--fructose-6-phosphate aminotransferase [isomerizing] from Methanothermobacter thermautotrophicus (strain ATCC 29096 / DSM 1053 / JCM 10044 / NBRC 100330 / Delta H) (Methanobacterium thermoautotrophicum).